Reading from the N-terminus, the 639-residue chain is UvrABC system protein C (639 aa).

Positions 20–97 (ERSGVYRMFD…IKKFQPKFNI (78 aa)) constitute a GIY-YIG domain. A UVR domain is found at 207–242 (KELQENLSRKMEELSSQMRFEEAAEIRDRIKALSYV).

The protein belongs to the UvrC family. As to quaternary structure, interacts with UvrB in an incision complex.

The protein localises to the cytoplasm. In terms of biological role, the UvrABC repair system catalyzes the recognition and processing of DNA lesions. UvrC both incises the 5' and 3' sides of the lesion. The N-terminal half is responsible for the 3' incision and the C-terminal half is responsible for the 5' incision. The sequence is that of UvrABC system protein C from Rickettsia rickettsii (strain Iowa).